A 164-amino-acid polypeptide reads, in one-letter code: MRPRKRRIVDFEHSARQFRPFGPESEIPEEVLLTIDELEVMRLSFLENLSQGEAALRMEIHQSTFQRALKKALEKVTDALVHGKAIRIEGGDYRMPRGDGTGPAGQGPVGGGRSRGQGKGRGGRFGGPDGNCVCPACGYETPHTPGVSCSQVKCEKCGSSMVRK.

The interval 91 to 124 (GDYRMPRGDGTGPAGQGPVGGGRSRGQGKGRGGR) is disordered. Over residues 99–115 (DGTGPAGQGPVGGGRSR) the composition is skewed to gly residues.

This sequence belongs to the UPF0251 family.

This chain is UPF0251 protein MA_0157, found in Methanosarcina acetivorans (strain ATCC 35395 / DSM 2834 / JCM 12185 / C2A).